A 122-amino-acid polypeptide reads, in one-letter code: Large ribosomal subunit protein bL12 (122 aa).

It belongs to the bacterial ribosomal protein bL12 family. Homodimer. Part of the ribosomal stalk of the 50S ribosomal subunit. Forms a multimeric L10(L12)X complex, where L10 forms an elongated spine to which 2 to 4 L12 dimers bind in a sequential fashion. Binds GTP-bound translation factors.

In terms of biological role, forms part of the ribosomal stalk which helps the ribosome interact with GTP-bound translation factors. Is thus essential for accurate translation. The polypeptide is Large ribosomal subunit protein bL12 (Sodalis glossinidius (strain morsitans)).